A 281-amino-acid polypeptide reads, in one-letter code: NAD kinase (281 aa).

Aspartate 61 functions as the Proton acceptor in the catalytic mechanism. NAD(+) contacts are provided by residues 61–62 (DG), 134–135 (ND), arginine 145, aspartate 164, 175–180 (TAYSLS), and glutamine 234.

Belongs to the NAD kinase family. It depends on a divalent metal cation as a cofactor.

The protein localises to the cytoplasm. The enzyme catalyses NAD(+) + ATP = ADP + NADP(+) + H(+). Involved in the regulation of the intracellular balance of NAD and NADP, and is a key enzyme in the biosynthesis of NADP. Catalyzes specifically the phosphorylation on 2'-hydroxyl of the adenosine moiety of NAD to yield NADP. The chain is NAD kinase from Clostridium botulinum (strain 657 / Type Ba4).